A 474-amino-acid polypeptide reads, in one-letter code: SHC-transforming protein 3 (474 aa).

The segment at 1–27 (MSATRKSRAGDEPLPRPPRGAPHTSDQ) is disordered. A PID domain is found at 29 to 214 (LGPGVTYVVK…LDEPWTEEEG (186 aa)). Residues 215-378 (DGPDHPYYNS…RMLEELNAEP (164 aa)) form a CH1 region. Position 282 is a phosphoserine (Ser-282). The tract at residues 308–328 (QPVPPQVWPAATSSTESSPRK) is disordered. In terms of domain architecture, SH2 spans 379–470 (WYQGEMSRKE…GSELCLQQPV (92 aa)).

As to quaternary structure, interacts with the Trk receptors in a phosphotyrosine-dependent manner. Once activated, binds to GRB2. Interacts with activated EGF receptors. Tyrosine phosphorylated. In terms of tissue distribution, predominantly expressed in the adult brain.

Signaling adapter that couples activated growth factor receptors to signaling pathway in neurons. Involved in the signal transduction pathways of neurotrophin-activated Trk receptors in cortical neurons. In Mus musculus (Mouse), this protein is SHC-transforming protein 3 (Shc3).